Consider the following 128-residue polypeptide: MRDWRFFEDGNLSCSRFELVILASQRAYDLQSGSLPDVQHEESDKSPVIALKELYSLSMDYEKLFHAAIRRIVHFSGSGYAGISSDSGAARPHARGLVEHIDHDLVEERDSEVFSDSEFSFAEDEGDE.

The protein belongs to the RNA polymerase subunit omega family. In terms of assembly, the RNAP catalytic core consists of 2 alpha, 1 beta, 1 beta' and 1 omega subunit. When a sigma factor is associated with the core the holoenzyme is formed, which can initiate transcription.

The enzyme catalyses RNA(n) + a ribonucleoside 5'-triphosphate = RNA(n+1) + diphosphate. In terms of biological role, promotes RNA polymerase assembly. Latches the N- and C-terminal regions of the beta' subunit thereby facilitating its interaction with the beta and alpha subunits. This is DNA-directed RNA polymerase subunit omega from Neorickettsia sennetsu (strain ATCC VR-367 / Miyayama) (Ehrlichia sennetsu).